Reading from the N-terminus, the 34-residue chain is Beta/mu-theraphotoxin-Pe1a (34 aa).

Disulfide bonds link C2–C16, C9–C21, and C15–C28.

It belongs to the neurotoxin 10 (Hwtx-1) family. 54 (ProTx-1) subfamily. In terms of tissue distribution, expressed by the venom gland.

The protein resides in the secreted. Functionally, ion channel impairing toxin that inhibits voltage-gated sodium channels. The recombinantly expressed toxin shows a weak activity against Nav1.7/SCN9A (25% inhibition at 10 uM), and shifts the voltage dependence of channel activation to more depolarized potentials. The sequence is that of Beta/mu-theraphotoxin-Pe1a from Phormingochilus everetti (Malaysian purple earth tiger tarantula).